Here is a 421-residue protein sequence, read N- to C-terminus: Testin (421 aa).

One can recognise a PET domain in the interval 92 to 199 (MILTNPVAAK…GDVKLPCEMD (108 aa)). The segment at 133-164 (EKQPVAGSEGAQYRKKQLAKQLPAHDQDPSKC) is disordered. Basic and acidic residues predominate over residues 155–164 (PAHDQDPSKC). 3 consecutive LIM zinc-binding domains span residues 234 to 297 (YFCY…CDSE), 299 to 359 (PRCA…NHAV), and 362 to 421 (QGCH…KMMS).

This sequence belongs to the prickle / espinas / testin family. Interacts via LIM domain 1 with ZYX. Interacts (via LIM domain 3) with ENAH and VASP. Interacts with ALKBH4, talin, actin, alpha-actinin, GRIP1 and PXN. Interacts (via LIM domain 2) with ACTL7A (via N-terminus). Heterodimer with ACTL7A; the heterodimer interacts with ENAH to form a heterotrimer.

The protein resides in the cytoplasm. It is found in the cell junction. The protein localises to the focal adhesion. Its function is as follows. Scaffold protein that may play a role in cell adhesion, cell spreading and in the reorganization of the actin cytoskeleton. Plays a role in the regulation of cell proliferation. May act as a tumor suppressor. This chain is Testin (TES), found in Plecturocebus moloch (Dusky titi monkey).